The primary structure comprises 927 residues: DNA-binding protein RFX6 (927 aa).

Disordered stretches follow at residues M1–P21 and N81–S108. The RFX-type winged-helix DNA-binding region spans T123–E198.

The protein belongs to the RFX family. Interacts with RFX3. In terms of tissue distribution, in the adult pancreas, expression is restricted to the islets where it could be detected in all endocrine lineages.

The protein resides in the nucleus. Transcription factor required to direct islet cell differentiation during endocrine pancreas development. Specifically required for the differentiation of 4 of the 5 islet cell types and for the production of insulin. Not required for pancreatic PP (polypeptide-producing) cells differentiation. Acts downstream of NEUROG3 and regulates the transcription factors involved in beta-cell maturation and function, thereby restricting the expression of the beta-cell differentiation and specification genes, and thus the beta-cell fate choice. Activates transcription by forming a heterodimer with RFX3 and binding to the X-box in the promoter of target genes. Involved in glucose-stimulated insulin secretion by promoting insulin and L-type calcium channel gene transcription. The protein is DNA-binding protein RFX6 (Rfx6) of Mus musculus (Mouse).